The sequence spans 1567 residues: Putative DEAH-box ATP-dependent helicase UM11114 (1567 aa).

Disordered stretches follow at residues 1–95 and 670–734; these read MAPR…PGSK and ESSV…ETRR. A compositionally biased stretch (polar residues) spans 10-20; it reads IKSSGTTSSKA. 2 stretches are compositionally biased toward low complexity: residues 39 to 48 and 55 to 73; these read TKAAKQQQTQ and AISA…AASS. Over residues 74–83 the composition is skewed to gly residues; it reads AGGGGGGGQG. Composition is skewed to polar residues over residues 670 to 687 and 713 to 726; these read ESSV…TPTG and LQRQ…SPSY. The Helicase ATP-binding domain occupies 746 to 924; the sequence is LGLIRSNRVV…FGKAPCISIP (179 aa). 759–766 is a binding site for ATP; sequence GETGCGKT. Positions 871 to 874 match the DEAH box motif; it reads DEVH. The Helicase C-terminal domain occupies 1003–1184; that stretch reads VVRYVVERAE…SLFLEVKSMR (182 aa).

Belongs to the DEAD box helicase family. DEAH subfamily.

The protein is Putative DEAH-box ATP-dependent helicase UM11114 of Mycosarcoma maydis (Corn smut fungus).